The chain runs to 168 residues: Lipoprotein signal peptidase (168 aa).

The next 3 helical transmembrane spans lie at 8–28 (LYYLLAFVVILIDQWTKWLVV), 61–81 (GQFWLFYLITIVVVVGIVIYI), and 91–111 (FGIALGLMLGGALGNFIDRIF). Active-site residues include Asp117 and Asp135. Residues 128 to 148 (FPIFNVADAALTIGVALMFIY) form a helical membrane-spanning segment.

This sequence belongs to the peptidase A8 family.

The protein resides in the cell membrane. The enzyme catalyses Release of signal peptides from bacterial membrane prolipoproteins. Hydrolyzes -Xaa-Yaa-Zaa-|-(S,diacylglyceryl)Cys-, in which Xaa is hydrophobic (preferably Leu), and Yaa (Ala or Ser) and Zaa (Gly or Ala) have small, neutral side chains.. It functions in the pathway protein modification; lipoprotein biosynthesis (signal peptide cleavage). Functionally, this protein specifically catalyzes the removal of signal peptides from prolipoproteins. This Anoxybacillus flavithermus (strain DSM 21510 / WK1) protein is Lipoprotein signal peptidase.